Here is a 284-residue protein sequence, read N- to C-terminus: Nucleotide-binding protein NGK_0463 (284 aa).

8 to 15 contributes to the ATP binding site; sequence GLSGSGKS. Residue 58–61 participates in GTP binding; sequence DVRS.

It belongs to the RapZ-like family.

Its function is as follows. Displays ATPase and GTPase activities. This chain is Nucleotide-binding protein NGK_0463, found in Neisseria gonorrhoeae (strain NCCP11945).